The following is a 390-amino-acid chain: MQNLNVGLIGGGFMGKAHSLAYAAMPMFFWPAPALPVRKVIAEANPELAAEAARRFGFENSTSDWRSIIDDPDIHVVDIATPNHLHAEIAIAAAEAGKHIICEKPLARTGEESKAMYDAVKDKNIVHMVAFNYRRTPAVALAKKYIEEGAIGRILSFRGTYLQDWSADPNSPLSWRFQKSIAGSGALGDIATHVIDMARYLVGEFSAVNAVLSTWIPERPLQSGGADALGTVRGGEGPKGPVDVDDEVMTMIRFANGAVGSVEATRNAHGRNNYITFEIHGTEGSIVFNYERRDELQVAFASDQADRRGFRTVYTGPAHPYGEGLWPIPALGIGYGETKIIEAHDFFKAIAEGGSVSPSFADGYQVALIDDAIVESAAKESWVDVPQISA.

The NADH site is built by phenylalanine 13, methionine 14, glutamate 43, threonine 81, asparagine 83, histidine 86, glutamate 103, lysine 104, alanine 130, and asparagine 132. Position 104 (lysine 104) interacts with levoglucosan. Residues tyrosine 133 and glutamine 163 each contribute to the levoglucosan site. Residues tryptophan 175 and arginine 176 each coordinate NADH. The levoglucosan site is built by arginine 176, aspartate 189, and histidine 193. Residue tyrosine 335 participates in NADH binding.

It belongs to the Gfo/Idh/MocA family. As to quaternary structure, homotetramer.

It catalyses the reaction levoglucosan + NAD(+) = 3-dehydrolevoglucosan + NADH + H(+). Its function is as follows. Catalyzes the oxidation of levoglucosan (1,6-anhydro-beta-D-glucose, LG) to 3-dehydrolevoglucosan (3-keto-LG). Exhibits high substrate specificity toward levoglucosan and NAD(+) for the oxidative reaction. Exhibits weak activities (about 4% compared with that of LG) toward L-sorbose and 1,5-anhydro-D-glucitol, and activity toward D-xylose is also detectable (1.7%). Can also efficiently catalyzes the NADH-dependent reduction (reverse reaction) of 3-keto-LG. The protein is Levoglucosan dehydrogenase of Pseudarthrobacter phenanthrenivorans (strain DSM 18606 / JCM 16027 / LMG 23796 / Sphe3) (Arthrobacter phenanthrenivorans).